The chain runs to 2171 residues: Voltage-dependent L-type calcium channel subunit alpha-1C (2171 aa).

The Cytoplasmic segment spans residues 1 to 154 (MLRALVQPAT…RACISIVEWK (154 aa)). Positions 77 to 98 (GAALSWQAAIDAARQAKLMGSA) are calmodulin-binding. The segment at 103 to 128 (ISTVSSTQRKRQQYGKPKKQGSTTAT) is disordered. A compositionally biased stretch (basic residues) spans 110–121 (QRKRQQYGKPKK). Residues 141–438 (NPIRRACISI…LVLGVLSGEF (298 aa)) form an I repeat. The helical transmembrane segment at 155–173 (PFEIIILLTIFANCVALAI) threads the bilayer. The Extracellular portion of the chain corresponds to 174 to 188 (YIPFPEDDSNATNSN). Asn-183 carries an N-linked (GlcNAc...) asparagine glycan. Residues 189 to 209 (LERVEYLFLIIFTVEAFLKVI) form a helical membrane-spanning segment. Over 210–218 (AYGLLFHPN) the chain is Cytoplasmic. A helical membrane pass occupies residues 219-239 (AYLRNGWNLLDFIIVVVGLFS). At 240–262 (AILEQATKADGANALGGKGAGFD) the chain is on the extracellular side. Residues 263–281 (VKALRAFRVLRPLRLVSGV) traverse the membrane as a helical segment. At 282–298 (PSLQVVLNSIIKAMVPL) the chain is on the cytoplasmic side. Residues 299-320 (LHIALLVLFVIIIYAIIGLELF) form a helical membrane-spanning segment. Residues 321 to 380 (MGKMHKTCYNQEGVADVPAEDDPSPCALETGHGRQCQNGTVCKPGWDGPKHGITNFDNFA) lie on the Extracellular side of the membrane. Cystine bridges form between Cys-328/Cys-356 and Cys-346/Cys-362. Residue Asn-358 is glycosylated (N-linked (GlcNAc...) asparagine). Positions 381-402 (FAMLTVFQCITMEGWTDVLYWM) form an intramembrane region, pore-forming. The Selectivity filter of repeat I motif lies at 391–394 (TMEG). Glu-393 is a Ca(2+) binding site. Topologically, residues 403 to 410 (QDAMGYEL) are extracellular. A helical transmembrane segment spans residues 411–431 (PWVYFVSLVIFGSFFVLNLVL). The Cytoplasmic segment spans residues 432 to 554 (GVLSGEFSKE…RKCRAAVKSN (123 aa)). Positions 458 to 475 (QQLEEDLKGYLDWITQAE) are AID/alpha-interaction domain; mediates interaction with the beta subunit. The interval 479-511 (PENEDEGMDEEKPRNMSMPTSETESVNTENVAG) is disordered. Polar residues predominate over residues 495–508 (SMPTSETESVNTEN). The residue at position 499 (Ser-499) is a Phosphoserine. Position 506 is a phosphothreonine (Thr-506). One copy of the II repeat lies at 540–786 (NRFCRRKCRA…VFLAIAVDNL (247 aa)). The chain crosses the membrane as a helical span at residues 555–573 (VFYWLVIFLVFLNTLTIAS). Residues 574 to 584 (EHYNQPHWLTE) lie on the Extracellular side of the membrane. Residues 585 to 605 (VQDTANKALLALFTAEMLLKM) traverse the membrane as a helical segment. The Cytoplasmic segment spans residues 606-616 (YSLGLQAYFVS). Residues 617–636 (LFNRFDCFIVCGGILETILV) form a helical membrane-spanning segment. The Extracellular portion of the chain corresponds to 637 to 645 (ETKVMSPLG). A helical membrane pass occupies residues 646–664 (ISVLRCVRLLRIFKITRYW). At 665–683 (NSLSNLVASLLNSVRSIAS) the chain is on the cytoplasmic side. The helical transmembrane segment at 684–703 (LLLLLFLFIIIFSLLGMQLF) threads the bilayer. Residues 704 to 723 (GGKFNFDEMQTRRSTFDNFP) are Extracellular-facing. The pore-forming intramembrane region spans 724-745 (QSLLTVFQILTGEDWNSVMYDG). Residues 734–737 (TGED) carry the Selectivity filter of repeat II motif. Glu-736 provides a ligand contact to Ca(2+). Over 746 to 755 (IMAYGGPSFP) the chain is Extracellular. A helical membrane pass occupies residues 756–775 (GMLVCIYFIILFICGNYILL). Over 776 to 930 (NVFLAIAVDN…LQCHRIVNDT (155 aa)) the chain is Cytoplasmic. Residues 794–891 (SAQKEEEEEK…EMPVGPRPRP (98 aa)) form a disordered region. The segment covering 813 to 836 (SPEKKQEVVGKPALEEAKEEKIEL) has biased composition (basic and acidic residues). Residues Ser-838 and Ser-845 each carry the phosphoserine modification. Residues 859 to 906 (NESEDKSPYPNPETTGEEDEEEPEMPVGPRPRPLSELHLKEKAVPMPE) are interaction with STAC2. Positions 873-882 (TGEEDEEEPE) are enriched in acidic residues. The III repeat unit spans residues 917–1199 (NRFRLQCHRI…IFVGFVIVTF (283 aa)). A helical membrane pass occupies residues 931-949 (IFTNLILFFILLSSISLAA). The Extracellular portion of the chain corresponds to 950-961 (EDPVQHTSFRNH). The chain crosses the membrane as a helical span at residues 962-981 (ILFYFDIVFTTIFTIEIALK). At 982 to 997 (MTAYGAFLHKGSFCRN) the chain is on the cytoplasmic side. A helical transmembrane segment spans residues 998-1016 (YFNILDLLVVSVSLISFGI). Topologically, residues 1017–1023 (QSSAINV) are extracellular. The helical transmembrane segment at 1024–1042 (VKILRVLRVLRPLRAINRA) threads the bilayer. Topologically, residues 1043-1061 (KGLKHVVQCVFVAIRTIGN) are cytoplasmic. Residues 1062–1081 (IVIVTTLLQFMFACIGVQLF) traverse the membrane as a helical segment. At 1082–1131 (KGKLYTCSDSSKQTEAECKGNYITYKDGEVDHPIIQPRSWENSKFDFDNV) the chain is on the extracellular side. Cys-1088 and Cys-1099 are disulfide-bonded. The interval 1119-1208 (RSWENSKFDF…FQEQGEQEYK (90 aa)) is dihydropyridine binding. Positions 1132 to 1152 (LAAMMALFTVSTFEGWPELLY) form an intramembrane region, pore-forming. The Selectivity filter of repeat III motif lies at 1143 to 1146 (TFEG). Glu-1145 is a binding site for Ca(2+). At 1153-1169 (RSIDSHTEDKGPIYNYR) the chain is on the extracellular side. The chain crosses the membrane as a helical span at residues 1170–1191 (VEISIFFIIYIIIIAFFMMNIF). Topologically, residues 1192 to 1249 (VGFVIVTFQEQGEQEYKNCELDKNQRQCVEYALKARPLRRYIPKNQHQYKVWYVVNST) are cytoplasmic. The stretch at 1236-1509 (NQHQYKVWYV…LFVAVIMDNF (274 aa)) is one IV repeat. A helical membrane pass occupies residues 1250-1271 (YFEYLMFVLILLNTICLAMQHY). The Extracellular portion of the chain corresponds to 1272 to 1279 (GQSCLFKI). Residues 1280–1301 (AMNILNMLFTGLFTVEMILKLI) traverse the membrane as a helical segment. The Cytoplasmic segment spans residues 1302–1311 (AFKPKGYFSD). Residues 1312-1331 (PWNVFDFLIVIGSIIDVILS) traverse the membrane as a helical segment. Over 1332–1354 (ETNPAEHTQCSPSMNAEENSRIS) the chain is Extracellular. A helical membrane pass occupies residues 1355–1373 (ITFFRLFRVMRLVKLLSRG). Over 1374 to 1391 (EGIRTLLWTFIKSFQALP) the chain is Cytoplasmic. The helical transmembrane segment at 1392–1412 (YVALLIVMLFFIYAVIGMQVF) threads the bilayer. Residues 1413–1434 (GKIALNDTTEINRNNNFQTFPQ) lie on the Extracellular side of the membrane. Residue Asn-1418 is glycosylated (N-linked (GlcNAc...) asparagine). Residues 1435–1453 (AVLLLFRCATGEAWQDIML) constitute an intramembrane region (pore-forming). The Selectivity filter of repeat IV motif lies at 1444–1447 (TGEA). Residues 1454 to 1481 (ACMPGKKCAPESEPHNSTEGETPCGSSF) lie on the Extracellular side of the membrane. A dihydropyridine binding region spans residues 1460–1528 (KCAPESEPHN…LGPHHLDEFK (69 aa)). An intrachain disulfide couples Cys-1461 to Cys-1477. N-linked (GlcNAc...) asparagine glycosylation is present at Asn-1469. The phenylalkylamine binding stretch occupies residues 1474–1516 (ETPCGSSFAVFYFISFYMLCAFLIINLFVAVIMDNFDYLTRDW). Residues 1482 to 1506 (AVFYFISFYMLCAFLIINLFVAVIM) form a helical membrane-spanning segment. The Cytoplasmic portion of the chain corresponds to 1507-2171 (DNFDYLTRDW…ADRRAGVSSL (665 aa)). The interval 1641–1668 (DEVTVGKFYATFLIQEYFRKFKKRKEQG) is important for interaction with STAC1, STAC2 and STAC3. The segment at 1647–1667 (KFYATFLIQEYFRKFKKRKEQ) is calmodulin-binding IQ region. Positions 1681–1700 (LQAGLRTLHDIGPEIRRAIS) are important for localization in at the junctional membrane. Residues Ser-1700 and Ser-1721 each carry the phosphoserine modification. Residues 1760-1797 (ISKAGNNQGDTESPSHEKLVDSTFTPSSYSSTGSNANI) are disordered. Residues 1781–1793 (STFTPSSYSSTGS) show a composition bias toward polar residues. Ser-1928 bears the Phosphoserine; by PKA mark. Disordered regions lie at residues 1971–2014 (RSHS…EKLN), 2026–2060 (SGEN…GRQF), and 2114–2155 (SGGA…PGCG). The segment covering 2130–2140 (NRRDPGRDRAG) has biased composition (basic and acidic residues).

This sequence belongs to the calcium channel alpha-1 subunit (TC 1.A.1.11) family. CACNA1C subfamily. Component of a calcium channel complex consisting of a pore-forming alpha subunit (CACNA1C) and ancillary beta, gamma and delta subunits. The channel complex contains alpha, beta, gamma and delta subunits in a 1:1:1:1 ratio, i.e. it contains only one of each type of subunit. CACNA1C channel activity is modulated by ancillary subunits, such as CACNB1, CACNB2, CACNB3, CACNA2D1 and CACNA2D4. Interacts with CACNB1. Interacts with CACNB2. Identified in a complex with CACNA2D4 and CACNB3. Interacts with CACNB3. Interacts with CACNA2D1. Interacts with the gamma subunits CACNG4, CACNG6, CACNG7 and CACNG8. Interacts with CACNA2D4. Interacts with CALM1. Interacts (via the N-terminus and the C-terminal C and IQ motifs) with CABP1; this inhibits Ca(2+)-dependent channel inactivation. The binding via the C motif is calcium independent whereas the binding via IQ requires the presence of calcium and is mutually exclusive with calmodulin binding. The binding to the cytoplasmic N-terminal domain is calcium independent but is essential for the channel modulation. Interacts (via C-terminal CDB motif) with CABP5; in a calcium-dependent manner. Interacts with CIB1; the interaction increases upon cardiomyocytes hypertrophy. Interacts with STAC1, STAC2 and STAC3; this inhibits channel inactivation, probably by hindering CALM1 binding. In terms of processing, phosphorylation by PKA at Ser-1928 activates the channel. Elevated levels of blood glucose lead to increased phosphorylation by PKA. As to expression, expression in cardiac muscle. In lung, expressed in airway and vascular smooth muscle cells.

The protein resides in the cell membrane. It is found in the sarcolemma. It localises to the perikaryon. Its subcellular location is the postsynaptic density membrane. The protein localises to the cell projection. The protein resides in the dendrite. It is found in the T-tubule. The enzyme catalyses Ca(2+)(in) = Ca(2+)(out). Inhibited by dihydropyridines (DHP), such as isradipine. Inhibited by nifedipine. Channel activity is regulated by Ca(2+) and calmodulin. Binding of STAC1, STAC2 or STAC3 to a region that overlaps with the calmodulin binding site inhibits channel inactivation by Ca(2+) and calmodulin. Binding of calmodulin or CABP1 at the same regulatory sites results in opposite effects on the channel function. Shear stress and pressure increases calcium channel activity. Pore-forming, alpha-1C subunit of the voltage-gated calcium channel that gives rise to L-type calcium currents. Mediates influx of calcium ions into the cytoplasm, and thereby triggers calcium release from the sarcoplasm. Plays an important role in excitation-contraction coupling in the heart. Required for normal heart development and normal regulation of heart rhythm. Required for normal contraction of smooth muscle cells in blood vessels and in the intestine. Essential for normal blood pressure regulation via its role in the contraction of arterial smooth muscle cells. Long-lasting (L-type) calcium channels belong to the 'high-voltage activated' (HVA) group. In Oryctolagus cuniculus (Rabbit), this protein is Voltage-dependent L-type calcium channel subunit alpha-1C (CACNA1C).